The following is a 49-amino-acid chain: MRVNITLACTECGDRNYISTKNKRNHPERIELKKFCPRLNKYTLHRETK.

This sequence belongs to the bacterial ribosomal protein bL33 family.

In Staphylococcus saprophyticus subsp. saprophyticus (strain ATCC 15305 / DSM 20229 / NCIMB 8711 / NCTC 7292 / S-41), this protein is Large ribosomal subunit protein bL33B.